A 53-amino-acid chain; its full sequence is U13-myrmicitoxin-Tb1a (53 aa).

The N-terminal stretch at 1 to 23 is a signal peptide; it reads MKLIYIFSLVAVIAVTMIPGIMG. Positions 24–29 are excised as a propeptide; sequence EAEAEG. Lys-52 carries the post-translational modification Lysine amide.

Expressed by the venom gland.

It localises to the secreted. In terms of biological role, in vivo, this neurotoxin paralyzes about 70% of blowflies (L.caesar) one hour after intrathoracic injection, when tested at high doses (45 nmol/g). This is U13-myrmicitoxin-Tb1a from Tetramorium bicarinatum (Tramp ant).